Consider the following 393-residue polypeptide: Proteasome-activating nucleotidase (393 aa).

A coiled-coil region spans residues 15–53; it reads DEVQLVRLLEEKIKSLQIEIENLRKELNYYKAEMEKMLS. ATP-binding positions include 178–183 and Tyr-317; that span reads GTGKTM. Residues 365–393 adopt a coiled-coil conformation; that stretch reads MNDLVEAINKINVKRNKMESMKERREKYS. The segment at 391 to 393 is docks into pockets in the proteasome alpha-ring to cause gate opening; that stretch reads KYS.

The protein belongs to the AAA ATPase family. Homohexamer. The hexameric complex has a two-ring architecture resembling a top hat that caps the 20S proteasome core at one or both ends. Upon ATP-binding, the C-terminus of PAN interacts with the alpha-rings of the proteasome core by binding to the intersubunit pockets.

The protein localises to the cytoplasm. Its function is as follows. ATPase which is responsible for recognizing, binding, unfolding and translocation of substrate proteins into the archaeal 20S proteasome core particle. Is essential for opening the gate of the 20S proteasome via an interaction with its C-terminus, thereby allowing substrate entry and access to the site of proteolysis. Thus, the C-termini of the proteasomal ATPase function like a 'key in a lock' to induce gate opening and therefore regulate proteolysis. Unfolding activity requires energy from ATP hydrolysis, whereas ATP binding alone promotes ATPase-20S proteasome association which triggers gate opening, and supports translocation of unfolded substrates. The chain is Proteasome-activating nucleotidase from Saccharolobus solfataricus (strain ATCC 35092 / DSM 1617 / JCM 11322 / P2) (Sulfolobus solfataricus).